Reading from the N-terminus, the 485-residue chain is tRNA sulfurtransferase (485 aa).

Positions Glu-61–Arg-165 constitute a THUMP domain. ATP-binding positions include Leu-183–Ile-184, Lys-265, Gly-287, and Gln-296. Residues Cys-344 and Cys-456 are joined by a disulfide bond. The region spanning Leu-404–Asn-483 is the Rhodanese domain. Cys-456 functions as the Cysteine persulfide intermediate in the catalytic mechanism.

This sequence belongs to the ThiI family.

The protein localises to the cytoplasm. The catalysed reaction is [ThiI sulfur-carrier protein]-S-sulfanyl-L-cysteine + a uridine in tRNA + 2 reduced [2Fe-2S]-[ferredoxin] + ATP + H(+) = [ThiI sulfur-carrier protein]-L-cysteine + a 4-thiouridine in tRNA + 2 oxidized [2Fe-2S]-[ferredoxin] + AMP + diphosphate. It catalyses the reaction [ThiS sulfur-carrier protein]-C-terminal Gly-Gly-AMP + S-sulfanyl-L-cysteinyl-[cysteine desulfurase] + AH2 = [ThiS sulfur-carrier protein]-C-terminal-Gly-aminoethanethioate + L-cysteinyl-[cysteine desulfurase] + A + AMP + 2 H(+). It participates in cofactor biosynthesis; thiamine diphosphate biosynthesis. Its function is as follows. Catalyzes the ATP-dependent transfer of a sulfur to tRNA to produce 4-thiouridine in position 8 of tRNAs, which functions as a near-UV photosensor. Also catalyzes the transfer of sulfur to the sulfur carrier protein ThiS, forming ThiS-thiocarboxylate. This is a step in the synthesis of thiazole, in the thiamine biosynthesis pathway. The sulfur is donated as persulfide by IscS. The protein is tRNA sulfurtransferase of Haemophilus influenzae (strain PittGG).